The chain runs to 115 residues: Protein Rev (115 aa).

Phosphoserine; by host CK2 is present on residues Ser5 and Ser8. The homomultimerization stretch occupies residues Leu18–Asn26. Positions Tyr23–Arg48 are disordered. The short motif at Thr34–Arg50 is the Nuclear localization signal and RNA-binding (RRE) element. Basic residues predominate over residues Gln36–Arg48. Positions Leu73–Asp83 match the Nuclear export signal and binding to XPO1 motif. The interval Gly89–Glu115 is disordered. Phosphoserine; by host is present on residues Ser91 and Ser98.

The protein belongs to the HIV-1 REV protein family. Homomultimer; when bound to the RRE. Multimeric assembly is essential for activity and may involve XPO1. Binds to human KPNB1, XPO1, TNPO1, RANBP5 and IPO7. Interacts with the viral Integrase. Interacts with human KHDRBS1. Interacts with human NAP1; this interaction decreases Rev multimerization and stimulates its activity. Interacts with human DEAD-box helicases DDX3 and DDX24; these interactions may serve for viral RNA export to the cytoplasm and packaging, respectively. Interacts with human PSIP1; this interaction may inhibit HIV-1 DNA integration by promoting dissociation of the Integrase-LEDGF/p75 complex. Post-translationally, asymmetrically arginine dimethylated at one site by host PRMT6. Methylation impairs the RNA-binding activity and export of viral RNA from the nucleus to the cytoplasm. Phosphorylated by protein kinase CK2. Presence of, and maybe binding to the N-terminus of the regulatory beta subunit of CK2 is necessary for CK2-mediated Rev's phosphorylation.

It is found in the host nucleus. It localises to the host nucleolus. The protein localises to the host cytoplasm. In terms of biological role, escorts unspliced or incompletely spliced viral pre-mRNAs (late transcripts) out of the nucleus of infected cells. These pre-mRNAs carry a recognition sequence called Rev responsive element (RRE) located in the env gene, that is not present in fully spliced viral mRNAs (early transcripts). This function is essential since most viral proteins are translated from unspliced or partially spliced pre-mRNAs which cannot exit the nucleus by the pathway used by fully processed cellular mRNAs. Rev itself is translated from a fully spliced mRNA that readily exits the nucleus. Rev's nuclear localization signal (NLS) binds directly to KPNB1/Importin beta-1 without previous binding to KPNA1/Importin alpha-1. KPNB1 binds to the GDP bound form of RAN (Ran-GDP) and targets Rev to the nucleus. In the nucleus, the conversion from Ran-GDP to Ran-GTP dissociates Rev from KPNB1 and allows Rev's binding to the RRE in viral pre-mRNAs. Rev multimerization on the RRE via cooperative assembly exposes its nuclear export signal (NES) to the surface. Rev can then form a complex with XPO1/CRM1 and Ran-GTP, leading to nuclear export of the complex. Conversion from Ran-GTP to Ran-GDP mediates dissociation of the Rev/RRE/XPO1/RAN complex, so that Rev can return to the nucleus for a subsequent round of export. Beside KPNB1, also seems to interact with TNPO1/Transportin-1, RANBP5/IPO5 and IPO7/RANBP7 for nuclear import. The nucleoporin-like HRB/RIP is an essential cofactor that probably indirectly interacts with Rev to release HIV RNAs from the perinuclear region to the cytoplasm. The chain is Protein Rev from Human immunodeficiency virus type 1 group M subtype B (isolate MN) (HIV-1).